A 907-amino-acid polypeptide reads, in one-letter code: MAPSSPSSAAAPTRTSTRKRAASASASAKATDEPSTKRTRRPKAETKPRKKKDEVKEEEKPPMEDDACGEEPDAEEMALGEEAEAEEAEAEQKQLDAPAPGVARKRVAQPSRVRHGSDGDHDPEFVGDPFPAKEARDKWPQRYQRNAATRRPDEEEDIKARCHYSSAKVDGTLYCLHDDVYVKAEEDKADYIGRITEFFEGTDHCHYFTCRWFFRAEDTVISSIMMENADDEKHDLKRVFLSEEKNDNVLDCIISKVKIVYIDPNMESEAKARRLADCDLYYDMSYTVAYSTFANIPLENGASGSDTASDISSDDVDSSKGKVVSDSEASSVGKATLLDLYSGCGGMSTGLCLGAALAGLNLETRWAVDFNSFACESLKYNHPRTEVRNEKADEFLALLKGWHSLCDEYVKKDIDFSSAGASENEEDDDEPLEKDEFVVEKLAGICYGGSGREDGLYFKVQWKGYGREEDTWEPIENLRDCPLKIKEFVQEGYRRKILPLPGDVDVICGGPPCQGISGFNRFRNRKEPLKDEKNKQMVTFMDIVAYLKPKYVLMENVVDILKFADGYLGRYALSRLVAMKYQARLGMMVAGCYGLPQFRMRVFLWGALPTMVLPKYPLPTHNVVVRGGAPNAFSQSIVAYDETQKPTLKNALLLGDAISDLPEVNNHQPNEVMEYGSSPKTEFQRYIRLSRKEMLDSSFEGKDGPDLGKLLDHQPLKLNKDDHERVQQIPVKKGANFRDLKGVRVGANNIVEWDPDVPRVYLSSGKPLVPDYAMSFIKGRSLKPFGRLWWDETVPTVVTRAEPHNQIILHPNQARVLTVRENARLQGFPDYYKMFGPIKEKYIQVGNAVAVPVARALGYSLGLAYQRESEGSSPLFVLPDSFTEVGRQAAPARASSVGIPVGEVVEQ.

The span at 1–15 (MAPSSPSSAAAPTRT) shows a compositional bias: low complexity. The disordered stretch occupies residues 1 to 154 (MAPSSPSSAA…RNAATRRPDE (154 aa)). The segment covering 30–63 (ATDEPSTKRTRRPKAETKPRKKKDEVKEEEKPPM) has biased composition (basic and acidic residues). The span at 64–89 (EDDACGEEPDAEEMALGEEAEAEEAE) shows a compositional bias: acidic residues. Composition is skewed to basic and acidic residues over residues 115–124 (HGSDGDHDPE) and 131–140 (PAKEARDKWP). The BAH domain occupies 172–297 (TLYCLHDDVY…VAYSTFANIP (126 aa)). The interval 303–323 (SGSDTASDISSDDVDSSKGKV) is disordered. An SAM-dependent MTase C5-type domain is found at 335-868 (ATLLDLYSGC…YSLGLAYQRE (534 aa)). One can recognise a Chromo domain in the interval 437-500 (FVVEKLAGIC…EGYRRKILPL (64 aa)). The active site involves Cys-513.

Belongs to the class I-like SAM-binding methyltransferase superfamily. C5-methyltransferase family.

It is found in the nucleus. The enzyme catalyses a 2'-deoxycytidine in DNA + S-adenosyl-L-methionine = a 5-methyl-2'-deoxycytidine in DNA + S-adenosyl-L-homocysteine + H(+). Involved in CpXpG DNA methylation. Plays a critical role in the maintenance of CpXpG DNA methylation and suppression of a wide spectrum of transposable element (TE) activities. Required for proper plant development in reproductive stage. The protein is DNA (cytosine-5)-methyltransferase CMT3 of Oryza sativa subsp. japonica (Rice).